Here is a 764-residue protein sequence, read N- to C-terminus: 5-methyltetrahydropteroyltriglutamate--homocysteine methyltransferase (764 aa).

5-methyltetrahydropteroyltri-L-glutamate-binding positions include 16-19 (RELK) and Lys121. L-homocysteine is bound by residues 440-442 (IGS) and Glu493. L-methionine is bound by residues 440 to 442 (IGS) and Glu493. Residues 524-525 (RC) and Trp570 each bind 5-methyltetrahydropteroyltri-L-glutamate. Asp608 serves as a coordination point for L-homocysteine. Position 608 (Asp608) interacts with L-methionine. Glu614 contributes to the 5-methyltetrahydropteroyltri-L-glutamate binding site. Zn(2+) contacts are provided by His650, Cys652, and Glu674. The active-site Proton donor is His703. A Zn(2+)-binding site is contributed by Cys735.

The protein belongs to the vitamin-B12 independent methionine synthase family. The cofactor is Zn(2+).

It carries out the reaction 5-methyltetrahydropteroyltri-L-glutamate + L-homocysteine = tetrahydropteroyltri-L-glutamate + L-methionine. It participates in amino-acid biosynthesis; L-methionine biosynthesis via de novo pathway; L-methionine from L-homocysteine (MetE route): step 1/1. Catalyzes the transfer of a methyl group from 5-methyltetrahydrofolate to homocysteine resulting in methionine formation. The protein is 5-methyltetrahydropteroyltriglutamate--homocysteine methyltransferase of Burkholderia ambifaria (strain MC40-6).